A 160-amino-acid chain; its full sequence is Eosinophil cationic protein (160 aa).

Positions Met1 to Ala27 are cleaved as a signal peptide. The required for nearly all of the bactericidal activities; partially involved in LPS-binding stretch occupies residues Lys28 to Arg72. The active-site Proton acceptor is the His42. 4 disulfide bridges follow: Cys50/Cys110, Cys64/Cys123, Cys82/Cys138, and Cys89/Cys98. Tyr60 carries the 3'-nitrotyrosine modification. A substrate-binding site is contributed by Lys65–Thr69. N-linked (GlcNAc...) asparagine glycans are attached at residues Asn86, Asn92, Asn111, and Asn119. The active-site Proton donor is His155.

It belongs to the pancreatic ribonuclease family. As to quaternary structure, interacts with bacterial lipopolysaccharide (LPS) and lipoteichoic acid (LTA). In vitro interacts with phospholipid bilayers.

The protein resides in the secreted. In terms of biological role, cytotoxin and helminthotoxin with low-efficiency ribonuclease activity. Possesses a wide variety of biological activities. Exhibits antibacterial activity. The polypeptide is Eosinophil cationic protein (RNASE3) (Pongo pygmaeus (Bornean orangutan)).